We begin with the raw amino-acid sequence, 302 residues long: MDEKRLTHLRQLEAESIHIIREVAAEFGNPVMLYSIGKDSSVMLHLARKAFFPGHLPFPLLHVDTGWKFREMYEFRDHTVKEFGCELLVHRNPEGVAMGINPFVHGSAKHTDIMKTEGLKQALNKYGFDAAFGGARRDEEKSRAKERIYSFRDRFHRWDPKNQRPELWHNYNGQINKGESIRVFPLSNWTELDIWQYIFLEKIEIVPLYLAKPRPVVERDGMLLMVDDDRIDLQPGEVIVQKKVRFRTLGCWPLTGAVESEAETLPAIIEEMLISTTSERQGRMIDRDQSGSMELKKRQGYF.

This sequence belongs to the PAPS reductase family. CysD subfamily. Heterodimer composed of CysD, the smaller subunit, and CysN.

The enzyme catalyses sulfate + ATP + H(+) = adenosine 5'-phosphosulfate + diphosphate. It participates in sulfur metabolism; hydrogen sulfide biosynthesis; sulfite from sulfate: step 1/3. With CysN forms the ATP sulfurylase (ATPS) that catalyzes the adenylation of sulfate producing adenosine 5'-phosphosulfate (APS) and diphosphate, the first enzymatic step in sulfur assimilation pathway. APS synthesis involves the formation of a high-energy phosphoric-sulfuric acid anhydride bond driven by GTP hydrolysis by CysN coupled to ATP hydrolysis by CysD. This is Sulfate adenylyltransferase subunit 2 from Yersinia pestis bv. Antiqua (strain Nepal516).